A 380-amino-acid polypeptide reads, in one-letter code: Alcohol dehydrogenase-like 4 (380 aa).

Zn(2+) is bound by residues C47, T49, H70, C100, C103, C106, C114, and C180. 2 residues coordinate an alcohol: T49 and H70. T49 lines the NAD(+) pocket. NAD(+)-binding positions include 205–210 (GLGAVG), D229, K234, 298–300 (LGV), F325, and R375.

It belongs to the zinc-containing alcohol dehydrogenase family. Class-III subfamily. In terms of assembly, homodimer. Requires Zn(2+) as cofactor.

The protein localises to the cytoplasm. The enzyme catalyses a primary alcohol + NAD(+) = an aldehyde + NADH + H(+). It carries out the reaction a secondary alcohol + NAD(+) = a ketone + NADH + H(+). The sequence is that of Alcohol dehydrogenase-like 4 from Arabidopsis thaliana (Mouse-ear cress).